Here is a 317-residue protein sequence, read N- to C-terminus: Protoheme IX farnesyltransferase (317 aa).

Transmembrane regions (helical) follow at residues 39-59, 60-80, 109-129, 131-151, 160-180, 184-204, 249-269, and 297-317; these read VLYL…GGIN, PILG…AGAI, GALA…WLAT, LLAA…YTMW, IVIG…AATG, LLPV…FWAL, VLHL…LAFV, and FKFS…DHLV.

This sequence belongs to the UbiA prenyltransferase family. Protoheme IX farnesyltransferase subfamily.

It is found in the cell inner membrane. It catalyses the reaction heme b + (2E,6E)-farnesyl diphosphate + H2O = Fe(II)-heme o + diphosphate. The protein operates within porphyrin-containing compound metabolism; heme O biosynthesis; heme O from protoheme: step 1/1. Converts heme B (protoheme IX) to heme O by substitution of the vinyl group on carbon 2 of heme B porphyrin ring with a hydroxyethyl farnesyl side group. The chain is Protoheme IX farnesyltransferase from Acidiphilium cryptum (strain JF-5).